A 590-amino-acid polypeptide reads, in one-letter code: Major surface protein MspTL (590 aa).

The first 19 residues, 1 to 19 (MKKILAFFLVFALAGAVFA), serve as a signal peptide directing secretion.

The protein resides in the cell outer membrane. In terms of biological role, major component of the outer membrane. The sequence is that of Major surface protein MspTL (mspTL) from Treponema lecithinolyticum.